Consider the following 372-residue polypeptide: GDP-mannose 4,6-dehydratase (372 aa).

NADP(+) contacts are provided by residues 9–14, 64–65, 86–90, and tyrosine 101; these read GVTGQD, DL, and LGAQS. Threonine 133 is a catalytic residue. Catalysis depends on nucleophile residues glutamate 135 and tyrosine 157. NADP(+) contacts are provided by lysine 161, histidine 187, and arginine 192.

It belongs to the NAD(P)-dependent epimerase/dehydratase family. GDP-mannose 4,6-dehydratase subfamily. Requires NADP(+) as cofactor.

The catalysed reaction is GDP-alpha-D-mannose = GDP-4-dehydro-alpha-D-rhamnose + H2O. The protein operates within nucleotide-sugar biosynthesis; GDP-L-fucose biosynthesis via de novo pathway; GDP-L-fucose from GDP-alpha-D-mannose: step 1/2. Catalyzes the conversion of GDP-D-mannose to GDP-4-dehydro-6-deoxy-D-mannose. The chain is GDP-mannose 4,6-dehydratase from Vibrio cholerae.